We begin with the raw amino-acid sequence, 248 residues long: Ribonuclease PH (248 aa).

Residues arginine 86 and 124–126 contribute to the phosphate site; that span reads GTR.

The protein belongs to the RNase PH family. In terms of assembly, homohexameric ring arranged as a trimer of dimers.

The enzyme catalyses tRNA(n+1) + phosphate = tRNA(n) + a ribonucleoside 5'-diphosphate. Phosphorolytic 3'-5' exoribonuclease that plays an important role in tRNA 3'-end maturation. Removes nucleotide residues following the 3'-CCA terminus of tRNAs; can also add nucleotides to the ends of RNA molecules by using nucleoside diphosphates as substrates, but this may not be physiologically important. Probably plays a role in initiation of 16S rRNA degradation (leading to ribosome degradation) during starvation. The polypeptide is Ribonuclease PH (Clostridium perfringens (strain SM101 / Type A)).